Consider the following 1363-residue polypeptide: Spike glycoprotein (1363 aa).

An N-terminal signal peptide occupies residues 1–13 (MFLILLISLPMAL). Over 14 to 1307 (AVIGDLKCTT…GTYEYYVKWP (1294 aa)) the chain is Extracellular. The BetaCoV S1-NTD domain occupies 15 to 298 (VIGDLKCTTV…DFMSEIKCKT (284 aa)). Disulfide bonds link C21/C165, C160/C193, C172/C252, C286/C296, and C331/C356. N-linked (GlcNAc...) asparagine; by host glycans are attached at residues N59 and N133. N-linked (GlcNAc...) asparagine; by host glycosylation occurs at N198. The BetaCoV S1-CTD domain maps to 329 to 617 (PDCNIEAWLN…DVNSGTTCST (289 aa)). N-linked (GlcNAc...) asparagine; by host glycosylation is present at N359. 2 disulfides stabilise this stretch: C374/C427 and C386/C615. Residues N437, N649, N676, N696, N714, N739, and N788 are each glycosylated (N-linked (GlcNAc...) asparagine; by host). Fusion peptide regions lie at residues 914 to 935 (SAIE…VEAY) and 933 to 953 (EAYN…VQSY). N-linked (GlcNAc...) asparagine; by host glycosylation occurs at N937. Residues C938 and C949 are joined by a disulfide bond. The heptad repeat 1 stretch occupies residues 1014-1064 (QKLIANAFNNALDAIQEGFDATNSALVKIQAVVNANAEALNNLLQQLSNRF). A coiled-coil region spans residues 1043-1087 (QAVVNANAEALNNLLQQLSNRFGAISSSLQEILSRLDALEAQRQI). N-linked (GlcNAc...) asparagine; by host glycans are attached at residues N1194, N1224, N1234, N1253, N1267, and N1288. Residues 1258 to 1296 (APDLSLDYINVTFLDLQDEMNRLQEAIKLLNQSYINLKD) are heptad repeat 2. Residues 1269 to 1297 (TFLDLQDEMNRLQEAIKLLNQSYINLKDI) are a coiled coil. The chain crosses the membrane as a helical span at residues 1308–1328 (WYVWLLIGFAGVAMLVLLFFI). Residues 1329 to 1363 (CCCTGCGTSCFKKCGGCCDDYTGHQELVIKTSHDD) lie on the Cytoplasmic side of the membrane. Residues 1359-1363 (TSHDD) carry the KxHxx motif.

The protein belongs to the betacoronaviruses spike protein family. As to quaternary structure, homotrimer; each monomer consists of a S1 and a S2 subunit. The resulting peplomers protrude from the virus surface as spikes. Post-translationally, specific enzymatic cleavages in vivo yield mature proteins. The precursor is processed into S1 and S2 by host cell furin or another cellular protease to yield the mature S1 and S2 proteins. Additionally, a second cleavage leads to the release of a fusion peptide after viral attachment to host cell receptor. The cytoplasmic Cys-rich domain is palmitoylated. Spike glycoprotein is digested within host endosomes.

It is found in the virion membrane. Its subcellular location is the host endoplasmic reticulum-Golgi intermediate compartment membrane. The protein resides in the host cell membrane. Attaches the virion to the cell membrane by interacting with host receptor, initiating the infection. In terms of biological role, mediates fusion of the virion and cellular membranes by acting as a class I viral fusion protein. Under the current model, the protein has at least three conformational states: pre-fusion native state, pre-hairpin intermediate state, and post-fusion hairpin state. During viral and target cell membrane fusion, the coiled coil regions (heptad repeats) assume a trimer-of-hairpins structure, positioning the fusion peptide in close proximity to the C-terminal region of the ectodomain. The formation of this structure appears to drive apposition and subsequent fusion of viral and target cell membranes. Its function is as follows. Acts as a viral fusion peptide which is unmasked following S2 cleavage occurring upon virus endocytosis. The polypeptide is Spike glycoprotein (Bos taurus (Bovine)).